A 435-amino-acid polypeptide reads, in one-letter code: Gamma-glutamyl phosphate reductase (435 aa).

Belongs to the gamma-glutamyl phosphate reductase family.

It is found in the cytoplasm. It catalyses the reaction L-glutamate 5-semialdehyde + phosphate + NADP(+) = L-glutamyl 5-phosphate + NADPH + H(+). Its pathway is amino-acid biosynthesis; L-proline biosynthesis; L-glutamate 5-semialdehyde from L-glutamate: step 2/2. In terms of biological role, catalyzes the NADPH-dependent reduction of L-glutamate 5-phosphate into L-glutamate 5-semialdehyde and phosphate. The product spontaneously undergoes cyclization to form 1-pyrroline-5-carboxylate. The chain is Gamma-glutamyl phosphate reductase from Bradyrhizobium diazoefficiens (strain JCM 10833 / BCRC 13528 / IAM 13628 / NBRC 14792 / USDA 110).